The primary structure comprises 251 residues: Imidazole glycerol phosphate synthase subunit HisF (251 aa).

Residues aspartate 11 and aspartate 130 contribute to the active site.

This sequence belongs to the HisA/HisF family. As to quaternary structure, heterodimer of HisH and HisF.

Its subcellular location is the cytoplasm. The enzyme catalyses 5-[(5-phospho-1-deoxy-D-ribulos-1-ylimino)methylamino]-1-(5-phospho-beta-D-ribosyl)imidazole-4-carboxamide + L-glutamine = D-erythro-1-(imidazol-4-yl)glycerol 3-phosphate + 5-amino-1-(5-phospho-beta-D-ribosyl)imidazole-4-carboxamide + L-glutamate + H(+). It functions in the pathway amino-acid biosynthesis; L-histidine biosynthesis; L-histidine from 5-phospho-alpha-D-ribose 1-diphosphate: step 5/9. Functionally, IGPS catalyzes the conversion of PRFAR and glutamine to IGP, AICAR and glutamate. The HisF subunit catalyzes the cyclization activity that produces IGP and AICAR from PRFAR using the ammonia provided by the HisH subunit. The protein is Imidazole glycerol phosphate synthase subunit HisF of Bacteroides thetaiotaomicron (strain ATCC 29148 / DSM 2079 / JCM 5827 / CCUG 10774 / NCTC 10582 / VPI-5482 / E50).